Here is a 1121-residue protein sequence, read N- to C-terminus: uncharacterized protein (1121 aa).

Residues 179–198 form a disordered region; that stretch reads GPGECQSVHNQSSGSGSNSY. N-linked (GlcNAc...) asparagine; by host glycans are attached at residues asparagine 188, asparagine 325, asparagine 351, asparagine 449, asparagine 561, and asparagine 615. Disordered regions lie at residues 649-684 and 701-734; these read KRIHSQNENPEDGQVREGGCSDVRNEPPRKSARIHN and STRQDASGGSSSGTKNEYYDDESELTGLSDTDSD. The segment covering 701–715 has biased composition (polar residues); sequence STRQDASGGSSSGTK. N-linked (GlcNAc...) asparagine; by host glycosylation is found at asparagine 838, asparagine 911, asparagine 914, and asparagine 980.

Belongs to the herpesviridae US22 family.

This is an uncharacterized protein from Homo sapiens (Human).